Consider the following 535-residue polypeptide: Bifunctional purine biosynthesis protein PurH (535 aa).

Residues 6-151 enclose the MGS-like domain; the sequence is TRLPIRRALI…KNHKDVAIVV (146 aa).

Belongs to the PurH family.

The catalysed reaction is (6R)-10-formyltetrahydrofolate + 5-amino-1-(5-phospho-beta-D-ribosyl)imidazole-4-carboxamide = 5-formamido-1-(5-phospho-D-ribosyl)imidazole-4-carboxamide + (6S)-5,6,7,8-tetrahydrofolate. It catalyses the reaction IMP + H2O = 5-formamido-1-(5-phospho-D-ribosyl)imidazole-4-carboxamide. Its pathway is purine metabolism; IMP biosynthesis via de novo pathway; 5-formamido-1-(5-phospho-D-ribosyl)imidazole-4-carboxamide from 5-amino-1-(5-phospho-D-ribosyl)imidazole-4-carboxamide (10-formyl THF route): step 1/1. It participates in purine metabolism; IMP biosynthesis via de novo pathway; IMP from 5-formamido-1-(5-phospho-D-ribosyl)imidazole-4-carboxamide: step 1/1. In Pseudomonas paraeruginosa (strain DSM 24068 / PA7) (Pseudomonas aeruginosa (strain PA7)), this protein is Bifunctional purine biosynthesis protein PurH.